Consider the following 206-residue polypeptide: Small ribosomal subunit protein uS4 (206 aa).

Residues 96-158 (GRLDNVVYRM…AKKQSRIKAA (63 aa)) form the S4 RNA-binding domain.

It belongs to the universal ribosomal protein uS4 family. As to quaternary structure, part of the 30S ribosomal subunit. Contacts protein S5. The interaction surface between S4 and S5 is involved in control of translational fidelity.

One of the primary rRNA binding proteins, it binds directly to 16S rRNA where it nucleates assembly of the body of the 30S subunit. In terms of biological role, with S5 and S12 plays an important role in translational accuracy. The protein is Small ribosomal subunit protein uS4 of Vibrio cholerae serotype O1 (strain ATCC 39541 / Classical Ogawa 395 / O395).